The sequence spans 257 residues: Spindlin-2C (257 aa).

Residues 1–47 (MKTPHKKGAAKEQMGEGVGHHIGSTTIKKKKASQKRQRSRSSSRRSI) are disordered. Positions 27–43 (IKKKKASQKRQRSRSSS) are enriched in basic residues. Tudor-like domain stretches follow at residues 48-97 (VGCR…LELH), 127-176 (IGKA…YQLL), and 208-253 (IGKH…YDLV). 2 histone H3K4me3 and H3R8me2a binding regions span residues E136 and 244-246 (DFH).

The protein belongs to the SPIN/STSY family. As to quaternary structure, interacts with C11orf84/SPINDOC.

The protein localises to the nucleus. May be involved in the regulation of cell cycle progression. Exhibits H3K4me3-binding activity. This Mus musculus (Mouse) protein is Spindlin-2C (Spin2c).